Consider the following 127-residue polypeptide: Fluoride-specific ion channel FluC (127 aa).

Transmembrane regions (helical) follow at residues 3-23 (LVFLWAALGGALGSSLRYFVG), 38-58 (LGTFSVNLIGCFVIGLMGHLA), 67-87 (FGIFFVTGVLGGFTTFSSYGL), and 102-122 (ISYVLGTNILGLIGVAIGWFL). 2 residues coordinate Na(+): G77 and T80.

It belongs to the fluoride channel Fluc/FEX (TC 1.A.43) family.

The protein localises to the cell inner membrane. The catalysed reaction is fluoride(in) = fluoride(out). Its activity is regulated as follows. Na(+) is not transported, but it plays an essential structural role and its presence is essential for fluoride channel function. Its function is as follows. Fluoride-specific ion channel. Important for reducing fluoride concentration in the cell, thus reducing its toxicity. The chain is Fluoride-specific ion channel FluC from Helicobacter acinonychis (strain Sheeba).